The sequence spans 572 residues: Butyrate--CoA ligase AAE11, peroxisomal (572 aa).

Positions 570–572 (SRL) match the Microbody targeting signal motif.

Belongs to the ATP-dependent AMP-binding enzyme family. In terms of tissue distribution, expressed in flowers.

The protein localises to the peroxisome. The enzyme catalyses a medium-chain fatty acid + ATP + CoA = a medium-chain fatty acyl-CoA + AMP + diphosphate. Butyrate--CoA ligase that is active in vitro with medium-chain fatty acids, with a preference for hexanoate and octanoate. This chain is Butyrate--CoA ligase AAE11, peroxisomal (AAE11), found in Arabidopsis thaliana (Mouse-ear cress).